We begin with the raw amino-acid sequence, 252 residues long: Zinc finger CCCH domain-containing protein 28 (252 aa).

The segment covering 1–21 (MSHRRDYGSDAVHVRITHDPP) has biased composition (basic and acidic residues). The interval 1-31 (MSHRRDYGSDAVHVRITHDPPPENCFPNSGD) is disordered. 2 C3H1-type zinc fingers span residues 71–99 (FFKT…HSAE) and 143–171 (NWKT…HGPS).

The polypeptide is Zinc finger CCCH domain-containing protein 28 (Arabidopsis thaliana (Mouse-ear cress)).